A 213-amino-acid chain; its full sequence is 3-isopropylmalate dehydratase small subunit (213 aa).

It belongs to the LeuD family. LeuD type 1 subfamily. In terms of assembly, heterodimer of LeuC and LeuD.

The catalysed reaction is (2R,3S)-3-isopropylmalate = (2S)-2-isopropylmalate. It participates in amino-acid biosynthesis; L-leucine biosynthesis; L-leucine from 3-methyl-2-oxobutanoate: step 2/4. In terms of biological role, catalyzes the isomerization between 2-isopropylmalate and 3-isopropylmalate, via the formation of 2-isopropylmaleate. The chain is 3-isopropylmalate dehydratase small subunit from Pseudomonas syringae pv. syringae (strain B728a).